Reading from the N-terminus, the 251-residue chain is Copper transport protein CTR1 (251 aa).

The helical transmembrane segment at 90–110 (AFGIFVLLFFVAFLARMLEFV) threads the bilayer. Basic and acidic residues predominate over residues 157–173 (DESIDKQNSPQHEETTK). Residues 157-176 (DESIDKQNSPQHEETTKARG) are disordered. Residues 208-228 (MLAAMTYTLTYFFAVVIGSGV) form a helical membrane-spanning segment.

In terms of assembly, oligomer.

Its subcellular location is the cell membrane. Its function is as follows. Required for high affinity copper (probably reduced Cu I) transport into the cell. In Candida albicans (strain SC5314 / ATCC MYA-2876) (Yeast), this protein is Copper transport protein CTR1 (CTR1).